The sequence spans 205 residues: Small ribosomal subunit protein uS4 (205 aa).

Positions 26 to 47 (PVNKREYGPGQHGQRRKQKPSD) are disordered. Residues 94–154 (RRLDAVVYRL…EKSKHLAIVL (61 aa)) form the S4 RNA-binding domain.

Belongs to the universal ribosomal protein uS4 family. In terms of assembly, part of the 30S ribosomal subunit. Contacts protein S5. The interaction surface between S4 and S5 is involved in control of translational fidelity.

Its function is as follows. One of the primary rRNA binding proteins, it binds directly to 16S rRNA where it nucleates assembly of the body of the 30S subunit. In terms of biological role, with S5 and S12 plays an important role in translational accuracy. The sequence is that of Small ribosomal subunit protein uS4 from Gluconacetobacter diazotrophicus (strain ATCC 49037 / DSM 5601 / CCUG 37298 / CIP 103539 / LMG 7603 / PAl5).